Reading from the N-terminus, the 172-residue chain is Transcriptional regulator CdrL (172 aa).

The disordered stretch occupies residues 72–113 (SPSAVEEVRTTPASGGRADAEEPGDDGETDAEHADTSATGDE). Residues 116–160 (CSQCGAELSADHVYCPNCGGKATHRVFCECGDEIRADWAFCPRCG) form a DZANK-type zinc finger.

Belongs to the CdrL family.

It is found in the cytoplasm. Transcriptional regulator involved in the control of cell division. The sequence is that of Transcriptional regulator CdrL from Halobacterium salinarum (strain ATCC 29341 / DSM 671 / R1).